We begin with the raw amino-acid sequence, 432 residues long: Probable imidazolonepropionase (432 aa).

4-imidazolone-5-propanoate-binding residues include Y159 and H192. Y159 contributes to the N-formimidoyl-L-glutamate binding site. H260 is a binding site for Fe(3+). Zn(2+) is bound at residue H260. E263 is a binding site for 4-imidazolone-5-propanoate. D334 contacts Fe(3+). Position 334 (D334) interacts with Zn(2+). N-formimidoyl-L-glutamate is bound at residue N336.

Belongs to the metallo-dependent hydrolases superfamily. HutI family. It depends on Zn(2+) as a cofactor. Fe(3+) serves as cofactor.

It catalyses the reaction 4-imidazolone-5-propanoate + H2O = N-formimidoyl-L-glutamate. Its pathway is amino-acid degradation; L-histidine degradation into L-glutamate; N-formimidoyl-L-glutamate from L-histidine: step 3/3. This Xenopus tropicalis (Western clawed frog) protein is Probable imidazolonepropionase (amdhd1).